The following is a 625-amino-acid chain: Complex I assembly factor ACAD9, mitochondrial (625 aa).

The N-terminal 41 residues, 1–41, are a transit peptide targeting the mitochondrion; that stretch reads MSGYVLFSRGATAAAAAARASRVLRVFTERRRTLHTSLQSC. Position 45 is an N6-acetyllysine (K45). K96 is modified (N6-succinyllysine). Catalysis depends on E430, which acts as the Proton acceptor. At T482 the chain carries Phosphothreonine. N6-acetyllysine; alternate is present on K525. K525 is subject to N6-succinyllysine; alternate.

The protein belongs to the acyl-CoA dehydrogenase family. In terms of assembly, homodimer. Interacts with NDUFAF1 and ECSIT. Part of the mitochondrial complex I assembly/MCIA complex that comprises at least the core subunits TMEM126B, NDUFAF1, ECSIT and ACAD9 and complement subunits such as COA1 and TMEM186. Interacts with TMEM70 and TMEM242. FAD is required as a cofactor.

The protein resides in the mitochondrion inner membrane. The catalysed reaction is eicosanoyl-CoA + oxidized [electron-transfer flavoprotein] + H(+) = (2E)-eicosenoyl-CoA + reduced [electron-transfer flavoprotein]. It catalyses the reaction octadecanoyl-CoA + oxidized [electron-transfer flavoprotein] + H(+) = (2E)-octadecenoyl-CoA + reduced [electron-transfer flavoprotein]. The enzyme catalyses oxidized [electron-transfer flavoprotein] + hexadecanoyl-CoA + H(+) = (2E)-hexadecenoyl-CoA + reduced [electron-transfer flavoprotein]. It carries out the reaction decanoyl-CoA + oxidized [electron-transfer flavoprotein] + H(+) = (2E)-decenoyl-CoA + reduced [electron-transfer flavoprotein]. The catalysed reaction is nonanoyl-CoA + oxidized [electron-transfer flavoprotein] + H(+) = (2E)-nonenoyl-CoA + reduced [electron-transfer flavoprotein]. It catalyses the reaction pentadecanoyl-CoA + oxidized [electron-transfer flavoprotein] + H(+) = (2E)-pentadecenoyl-CoA + reduced [electron-transfer flavoprotein]. The enzyme catalyses undecanoyl-CoA + oxidized [electron-transfer flavoprotein] + H(+) = trans-2-undecenoyl-CoA + reduced [electron-transfer flavoprotein]. It carries out the reaction (9Z)-hexadecenoyl-CoA + oxidized [electron-transfer flavoprotein] + H(+) = (2E,9Z)-hexadecadienoyl-CoA + reduced [electron-transfer flavoprotein]. The catalysed reaction is heptadecanoyl-CoA + oxidized [electron-transfer flavoprotein] + H(+) = trans-2-heptadecenoyl-CoA + reduced [electron-transfer flavoprotein]. It catalyses the reaction (9E)-octadecenoyl-CoA + oxidized [electron-transfer flavoprotein] + H(+) = (2E,9E)-octadecadienoyl-CoA + reduced [electron-transfer flavoprotein]. The enzyme catalyses oxidized [electron-transfer flavoprotein] + (9Z)-octadecenoyl-CoA + H(+) = (2E,9Z)-octadecadienoyl-CoA + reduced [electron-transfer flavoprotein]. It carries out the reaction (9Z,12Z)-octadecadienoyl-CoA + oxidized [electron-transfer flavoprotein] + H(+) = (2E,9Z,12Z)-octadecatrienoyl-CoA + reduced [electron-transfer flavoprotein]. The catalysed reaction is (4Z,7Z,10Z,13Z,16Z,19Z)-docosahexaenoyl-CoA + oxidized [electron-transfer flavoprotein] + H(+) = (2E,4Z,7Z,10Z,13Z,16Z,19Z)-docosaheptaenoyl-CoA + reduced [electron-transfer flavoprotein]. It catalyses the reaction tetradecanoyl-CoA + oxidized [electron-transfer flavoprotein] + H(+) = (2E)-tetradecenoyl-CoA + reduced [electron-transfer flavoprotein]. In terms of biological role, as part of the MCIA complex, primarily participates in the assembly of the mitochondrial complex I and therefore plays a role in oxidative phosphorylation. This moonlighting protein also has a dehydrogenase activity toward a broad range of substrates with greater specificity for long-chain unsaturated acyl-CoAs. However, in vivo, it does not seem to play a primary role in fatty acid oxidation. In addition, the function in complex I assembly is independent of the dehydrogenase activity of the protein. The protein is Complex I assembly factor ACAD9, mitochondrial of Rattus norvegicus (Rat).